The sequence spans 306 residues: tRNA dimethylallyltransferase (306 aa).

Position 2–9 (2–9 (GPTASGKT)) interacts with ATP. Position 4–9 (4–9 (TASGKT)) interacts with substrate. Interaction with substrate tRNA regions lie at residues 27–30 (DSVQ) and 152–156 (QRIVR).

It belongs to the IPP transferase family. As to quaternary structure, monomer. The cofactor is Mg(2+).

It catalyses the reaction adenosine(37) in tRNA + dimethylallyl diphosphate = N(6)-dimethylallyladenosine(37) in tRNA + diphosphate. In terms of biological role, catalyzes the transfer of a dimethylallyl group onto the adenine at position 37 in tRNAs that read codons beginning with uridine, leading to the formation of N6-(dimethylallyl)adenosine (i(6)A). This Magnetococcus marinus (strain ATCC BAA-1437 / JCM 17883 / MC-1) protein is tRNA dimethylallyltransferase.